Reading from the N-terminus, the 414-residue chain is Glycogen synthase (414 aa).

This sequence belongs to the glycosyltransferase group 1 family.

The catalysed reaction is [(1-&gt;4)-alpha-D-glucosyl](n) + UDP-alpha-D-glucose = [(1-&gt;4)-alpha-D-glucosyl](n+1) + UDP + H(+). The protein operates within glycan biosynthesis; glycogen biosynthesis. In terms of biological role, glucosyltransferase that uses UDP-glucose as the sugar donor to elongate alpha-(1-&gt;4)-glucans. Is involved in the biosynthesis of both 6-O-methylglucosyl lipopolysaccharides (MGLP) and glycogen. May also use ADP-glucose as substrate. This chain is Glycogen synthase, found in Mycobacterium tuberculosis (strain CDC 1551 / Oshkosh).